Reading from the N-terminus, the 171-residue chain is MAEKRNIFLVGPMGAGKSTIGRHLAQMLHLEFHDSDQEIEQRTGADIAWVFDVEGEEGFRRREAQVIADLSEKQGIVLATGGGSVQSKDIRNHLSARGIVVYLETTIDKQVARTQRDKRRPLLQVDDPREVLESLAEIRNPLYEEIADVIVKTDDQSAKIVANQIIEKLGF.

14–19 serves as a coordination point for ATP; sequence GAGKST. Position 18 (Ser18) interacts with Mg(2+). Positions 36, 60, and 82 each coordinate substrate. Arg120 contacts ATP. Arg139 contacts substrate. Gln156 contacts ATP.

It belongs to the shikimate kinase family. As to quaternary structure, monomer. The cofactor is Mg(2+).

The protein resides in the cytoplasm. The enzyme catalyses shikimate + ATP = 3-phosphoshikimate + ADP + H(+). Its pathway is metabolic intermediate biosynthesis; chorismate biosynthesis; chorismate from D-erythrose 4-phosphate and phosphoenolpyruvate: step 5/7. Functionally, catalyzes the specific phosphorylation of the 3-hydroxyl group of shikimic acid using ATP as a cosubstrate. In Shewanella putrefaciens (strain CN-32 / ATCC BAA-453), this protein is Shikimate kinase.